The following is a 132-amino-acid chain: Small ribosomal subunit protein uS8 (132 aa).

It belongs to the universal ribosomal protein uS8 family. As to quaternary structure, part of the 30S ribosomal subunit. Contacts proteins S5 and S12.

Its function is as follows. One of the primary rRNA binding proteins, it binds directly to 16S rRNA central domain where it helps coordinate assembly of the platform of the 30S subunit. The protein is Small ribosomal subunit protein uS8 of Lactobacillus delbrueckii subsp. bulgaricus (strain ATCC BAA-365 / Lb-18).